The chain runs to 89 residues: Small ribosomal subunit protein uS15 (89 aa).

Residues 1-21 (MALSKEQKTETLKEFGLHETD) are compositionally biased toward basic and acidic residues. The disordered stretch occupies residues 1-22 (MALSKEQKTETLKEFGLHETDT).

Belongs to the universal ribosomal protein uS15 family. Part of the 30S ribosomal subunit. Forms a bridge to the 50S subunit in the 70S ribosome, contacting the 23S rRNA.

In terms of biological role, one of the primary rRNA binding proteins, it binds directly to 16S rRNA where it helps nucleate assembly of the platform of the 30S subunit by binding and bridging several RNA helices of the 16S rRNA. Its function is as follows. Forms an intersubunit bridge (bridge B4) with the 23S rRNA of the 50S subunit in the ribosome. This Corynebacterium jeikeium (strain K411) protein is Small ribosomal subunit protein uS15.